Here is a 611-residue protein sequence, read N- to C-terminus: Poly(3-hydroxyalkanoate) polymerase subunit PhaC (611 aa).

The active site involves cysteine 349.

This sequence belongs to the PHA/PHB synthase family. Type I PhaC subfamily. Monomer.

It is found in the cytoplasm. The enzyme catalyses (3R)-3-hydroxybutanoyl-CoA + [(3R)-hydroxybutanoate](n) = [(3R)-hydroxybutanoate](n+1) + CoA. It functions in the pathway biopolymer metabolism; poly-(R)-3-hydroxybutanoate biosynthesis. In terms of biological role, polymerizes D(-)-3-hydroxybutyryl-CoA to create PHB which consists of thousands of hydroxybutyrate molecules linked end to end. PHB serves as an intracellular energy reserve material when cells grow under conditions of nutrient limitation. This is Poly(3-hydroxyalkanoate) polymerase subunit PhaC from Rhizobium meliloti (strain 1021) (Ensifer meliloti).